A 519-amino-acid chain; its full sequence is Zinc finger protein 692 (519 aa).

The interval 123–314 (GPSLSPTPSE…PAWDEDTAQI (192 aa)) is disordered. A compositionally biased stretch (polar residues) spans 145–155 (RSWCSEATSGQ). Position 162 is a phosphoserine (S162). The segment covering 164–173 (HDERTQEARL) has biased composition (basic and acidic residues). Over residues 177–187 (VGPPPETFPPP) the composition is skewed to pro residues. Over residues 188–206 (GEEEGEEEEDNDEDEEEML) the composition is skewed to acidic residues. S231 bears the Phosphoserine mark. A compositionally biased stretch (low complexity) spans 247-266 (AALSSPLAVPALSASSLSSR). Residues 277–303 (PQLSRTPQAAQQTEALASTGSQAQSAP) are compositionally biased toward polar residues. 5 consecutive C2H2-type zinc fingers follow at residues 328-353 (MPCD…KYQH), 359-383 (FSCP…MKLH), 389-411 (YICE…RRIH), 417-439 (LQCE…QRKH), and 448-471 (FPCE…SKSH). The disordered stretch occupies residues 469–519 (KSHPALLLAPQESPSGPLEPCPSISAPGPLGSSEGSRPSASPQAPTLLPQQ). A Phosphoserine; by AMPK modification is found at S470. The span at 501 to 519 (SEGSRPSASPQAPTLLPQQ) shows a compositional bias: polar residues.

This sequence belongs to the krueppel C2H2-type zinc-finger protein family. In terms of processing, phosphorylation at Ser-470 results in loss of DNA-binding activity. As to expression, ubiquitous. Highly expressed in brain, thymus and spleen.

The protein resides in the nucleus. Its function is as follows. May act as an transcriptional repressor for PCK1 gene expression, in turn may participate in the hepatic gluconeogenesis regulation through the activated AMPK signaling pathway. This chain is Zinc finger protein 692 (ZNF692), found in Homo sapiens (Human).